The chain runs to 369 residues: Aminomethyltransferase (369 aa).

The protein belongs to the GcvT family. The glycine cleavage system is composed of four proteins: P, T, L and H.

The catalysed reaction is N(6)-[(R)-S(8)-aminomethyldihydrolipoyl]-L-lysyl-[protein] + (6S)-5,6,7,8-tetrahydrofolate = N(6)-[(R)-dihydrolipoyl]-L-lysyl-[protein] + (6R)-5,10-methylene-5,6,7,8-tetrahydrofolate + NH4(+). Its function is as follows. The glycine cleavage system catalyzes the degradation of glycine. This chain is Aminomethyltransferase, found in Xanthomonas oryzae pv. oryzae (strain MAFF 311018).